A 235-amino-acid polypeptide reads, in one-letter code: 7-carboxy-7-deazaguanine synthase (235 aa).

Substrate is bound by residues isoleucine 25–glycine 27 and arginine 40. Residues phenylalanine 31–proline 235 form the Radical SAM core domain. Residues cysteine 44, cysteine 48, and cysteine 51 each contribute to the [4Fe-4S] cluster site. A Mg(2+)-binding site is contributed by threonine 53. Threonine 85 serves as a coordination point for substrate. S-adenosyl-L-methionine-binding positions include glycine 87 and serine 135–lysine 137. Residue proline 235 coordinates substrate.

Belongs to the radical SAM superfamily. 7-carboxy-7-deazaguanine synthase family. Homodimer. [4Fe-4S] cluster is required as a cofactor. S-adenosyl-L-methionine serves as cofactor. Requires Mg(2+) as cofactor.

It carries out the reaction 6-carboxy-5,6,7,8-tetrahydropterin + H(+) = 7-carboxy-7-deazaguanine + NH4(+). The protein operates within purine metabolism; 7-cyano-7-deazaguanine biosynthesis. Functionally, catalyzes the complex heterocyclic radical-mediated conversion of 6-carboxy-5,6,7,8-tetrahydropterin (CPH4) to 7-carboxy-7-deazaguanine (CDG), a step common to the biosynthetic pathways of all 7-deazapurine-containing compounds. In Hyperthermus butylicus (strain DSM 5456 / JCM 9403 / PLM1-5), this protein is 7-carboxy-7-deazaguanine synthase.